Reading from the N-terminus, the 355-residue chain is Probable butyrate kinase (355 aa).

This sequence belongs to the acetokinase family.

Its subcellular location is the cytoplasm. The catalysed reaction is butanoate + ATP = butanoyl phosphate + ADP. The polypeptide is Probable butyrate kinase (Listeria monocytogenes serotype 4b (strain CLIP80459)).